A 211-amino-acid polypeptide reads, in one-letter code: Nucleoside triphosphate pyrophosphatase (211 aa).

Asp-75 functions as the Proton acceptor in the catalytic mechanism.

Belongs to the Maf family. A divalent metal cation serves as cofactor.

The protein resides in the cytoplasm. The enzyme catalyses a ribonucleoside 5'-triphosphate + H2O = a ribonucleoside 5'-phosphate + diphosphate + H(+). It catalyses the reaction a 2'-deoxyribonucleoside 5'-triphosphate + H2O = a 2'-deoxyribonucleoside 5'-phosphate + diphosphate + H(+). Its function is as follows. Nucleoside triphosphate pyrophosphatase. May have a dual role in cell division arrest and in preventing the incorporation of modified nucleotides into cellular nucleic acids. The protein is Nucleoside triphosphate pyrophosphatase of Prochlorococcus marinus (strain NATL1A).